A 1403-amino-acid polypeptide reads, in one-letter code: DNA-directed RNA polymerase subunit beta' (1403 aa).

Residues C71, C73, C86, and C89 each coordinate Zn(2+). Residues D462, D464, and D466 each coordinate Mg(2+). Residues C820, C893, C900, and C903 each contribute to the Zn(2+) site.

The protein belongs to the RNA polymerase beta' chain family. As to quaternary structure, the RNAP catalytic core consists of 2 alpha, 1 beta, 1 beta' and 1 omega subunit. When a sigma factor is associated with the core the holoenzyme is formed, which can initiate transcription. Mg(2+) is required as a cofactor. It depends on Zn(2+) as a cofactor.

It carries out the reaction RNA(n) + a ribonucleoside 5'-triphosphate = RNA(n+1) + diphosphate. Functionally, DNA-dependent RNA polymerase catalyzes the transcription of DNA into RNA using the four ribonucleoside triphosphates as substrates. This chain is DNA-directed RNA polymerase subunit beta', found in Methylobacterium radiotolerans (strain ATCC 27329 / DSM 1819 / JCM 2831 / NBRC 15690 / NCIMB 10815 / 0-1).